Here is a 112-residue protein sequence, read N- to C-terminus: uncharacterized protein (112 aa).

The protein resides in the plastid. It localises to the chloroplast. This is an uncharacterized protein from Chlamydomonas reinhardtii (Chlamydomonas smithii).